The following is a 354-amino-acid chain: Protein sex-lethal (354 aa).

Residues 1–20 form a disordered region; that stretch reads MYGNNNPGSNNNNGGYPPYG. RRM domains lie at 127-205 and 213-293; these read TNLI…YARP and TNLY…LAQE.

Part of a complex containing fl(2)d, Sxl and vir. Interacts with nito. Interacts with Unr; cooperates with Sxl to prevent translation of msl-2 transcripts. Interacts with how; promoting nuclear retention of msl-2 transcripts. As to expression, the embryo-specific isoform is not expressed in the pole cells, which are the progenitors of the germline.

The protein resides in the nucleus. The protein localises to the cytoplasm. Functionally, sex determination switch protein, which controls sexual development and dosage compensation in females. Sxl protein is only active in females: it is inactive in males throughout development. Acts as a mRNA-binding protein, which specifically binds to a subset of pre-mRNAs and mRNAs and regulates their processing and/or translation. Promotes sexual development by controlling the female-specific alternative splicing of the transformer (tra) pre-mRNA: binds tightly to a characteristic uridine-rich polypyrimidine tract at the non-sex specific 3' splice site in one of the tra introns, preventing the general splicing factor U2AF from binding to this site and forcing it to bind to the female-specific 3' splice site. Acts as an inhibitor of dosage compensation in females by preventing production of msl-2 protein, an essential component of the MSL complex, the complex that mediates X-chromosome dosage compensation. Specifially binds to uridine stretches in both the 5'- and 3'-UTR of msl-2 transcripts. Sxl first acts at the splicing level by promoting retention of an intron in the 5' UTR of msl-2 pre-mRNA. The retained intron contains Sxl-binding sites that are required for subsequent steps of repression: after msl-2 mRNA export into the cytoplasm, Sxl coordinates its translational repression by targeting early steps of translation initiation. Together with how, Sxl also prevents production of msl-2 protein by preventing nuclear export of msl-2 transcripts. In Drosophila subobscura (Fruit fly), this protein is Protein sex-lethal.